Here is a 403-residue protein sequence, read N- to C-terminus: MATIDESLALIGRGAEEILKLEQLEARLTSGVPLRVKAGFDPTAPDLHLGHTVLLNKMRQFQELGHQVIFLIGDFTGMIGDPSGKNVTRKPLSREDVLANARTYEEQVFKILDRTRTEVRFNSEWFGQMSAADMIKLSAQHTVARMLERDDFAKRFAGQQPIAIHEFLYPLVQGYDSVALKADVELGGTDQTFNLLMGRGLQEHYGQAPQVVLTMPLLEGLDGVAKMSKSLGNYIGINEPAIDIVTKTMKIGDTLTWRWIDLLSFDISVAEAARFKEDVAAGNLHPRDVKLRLARELATRFHDAATAEQAIAGWHAVVTGQGDTSVLPLQQVSVPAEGLRIASLLTAAGLTPSNSEATRKLKERAVKIDGEVVDDLARQFGPGFEGVIQVGKRNFARVALVTS.

A 'HIGH' region motif is present at residues 42–51 (PTAPDLHLGH). The short motif at 226 to 230 (KMSKS) is the 'KMSKS' region element. Lys-229 serves as a coordination point for ATP. Positions 339-400 (LRIASLLTAA…GKRNFARVAL (62 aa)) constitute an S4 RNA-binding domain.

It belongs to the class-I aminoacyl-tRNA synthetase family. TyrS type 2 subfamily. In terms of assembly, homodimer.

It localises to the cytoplasm. It carries out the reaction tRNA(Tyr) + L-tyrosine + ATP = L-tyrosyl-tRNA(Tyr) + AMP + diphosphate + H(+). In terms of biological role, catalyzes the attachment of tyrosine to tRNA(Tyr) in a two-step reaction: tyrosine is first activated by ATP to form Tyr-AMP and then transferred to the acceptor end of tRNA(Tyr). In Xanthomonas campestris pv. campestris (strain ATCC 33913 / DSM 3586 / NCPPB 528 / LMG 568 / P 25), this protein is Tyrosine--tRNA ligase.